Consider the following 266-residue polypeptide: MFIMRREFPEEGDIVIGTVKDVKPYGAFVELLEYPGKEGMIHISEVTSGWVKNIRDHVKVGQRVVAKVLRVDERKGHIDLSLKRVTEQQKRAKVQEWKRFQRASKMLERAAEKLGKSLEEAWEEVGYLLEDEFGELYNAFETMVIEGKEVLDDLEISEEWKNVLYEVAKESIELTNVEVEGVIEMKSYAPDGIKQIKKALTTALKANPYEDVEVKITYIGAPKYRVVVIAPDYKSGEEVFKKVCEKAVATIKKLGGEGTYYRESKK.

One can recognise an S1 motif domain in the interval 12–83 (GDIVIGTVKD…RKGHIDLSLK (72 aa)).

Belongs to the eIF-2-alpha family. Heterotrimer composed of an alpha, a beta and a gamma chain.

Its function is as follows. eIF-2 functions in the early steps of protein synthesis by forming a ternary complex with GTP and initiator tRNA. This is Translation initiation factor 2 subunit alpha (eif2a) from Methanocaldococcus jannaschii (strain ATCC 43067 / DSM 2661 / JAL-1 / JCM 10045 / NBRC 100440) (Methanococcus jannaschii).